The chain runs to 373 residues: GDSL esterase/lipase LIP-4 (373 aa).

The first 32 residues, 1-32 (MATLFLYSNTFSFFFITLVSLALLILRQPSRA), serve as a signal peptide directing secretion. Serine 47 serves as the catalytic Nucleophile. Asparagine 93 carries N-linked (GlcNAc...) asparagine glycosylation. Active-site residues include aspartate 339 and histidine 342.

It belongs to the 'GDSL' lipolytic enzyme family.

It localises to the secreted. The chain is GDSL esterase/lipase LIP-4 (LIP4) from Arabidopsis thaliana (Mouse-ear cress).